The following is a 313-amino-acid chain: tRNA dimethylallyltransferase (313 aa).

11 to 18 lines the ATP pocket; sequence GPTAGGKT. 13–18 is a substrate binding site; sequence TAGGKT. Interaction with substrate tRNA stretches follow at residues 36–39, 160–164, and 243–248; these read DSAL, QRIGR, and RCVGYR.

Belongs to the IPP transferase family. Monomer. Requires Mg(2+) as cofactor.

The enzyme catalyses adenosine(37) in tRNA + dimethylallyl diphosphate = N(6)-dimethylallyladenosine(37) in tRNA + diphosphate. Its function is as follows. Catalyzes the transfer of a dimethylallyl group onto the adenine at position 37 in tRNAs that read codons beginning with uridine, leading to the formation of N6-(dimethylallyl)adenosine (i(6)A). The sequence is that of tRNA dimethylallyltransferase from Neisseria meningitidis serogroup A / serotype 4A (strain DSM 15465 / Z2491).